The sequence spans 361 residues: Phosphoserine aminotransferase (361 aa).

R42 is a binding site for L-glutamate. Residues 76–77, W102, T153, D173, and Q196 contribute to the pyridoxal 5'-phosphate site; that span reads AR. At K197 the chain carries N6-(pyridoxal phosphate)lysine. 238-239 is a binding site for pyridoxal 5'-phosphate; that stretch reads NT.

The protein belongs to the class-V pyridoxal-phosphate-dependent aminotransferase family. SerC subfamily. As to quaternary structure, homodimer. Requires pyridoxal 5'-phosphate as cofactor.

The protein resides in the cytoplasm. It carries out the reaction O-phospho-L-serine + 2-oxoglutarate = 3-phosphooxypyruvate + L-glutamate. The enzyme catalyses 4-(phosphooxy)-L-threonine + 2-oxoglutarate = (R)-3-hydroxy-2-oxo-4-phosphooxybutanoate + L-glutamate. The protein operates within amino-acid biosynthesis; L-serine biosynthesis; L-serine from 3-phospho-D-glycerate: step 2/3. It functions in the pathway cofactor biosynthesis; pyridoxine 5'-phosphate biosynthesis; pyridoxine 5'-phosphate from D-erythrose 4-phosphate: step 3/5. Catalyzes the reversible conversion of 3-phosphohydroxypyruvate to phosphoserine and of 3-hydroxy-2-oxo-4-phosphonooxybutanoate to phosphohydroxythreonine. The chain is Phosphoserine aminotransferase from Mannheimia succiniciproducens (strain KCTC 0769BP / MBEL55E).